The sequence spans 409 residues: Methylthioribose-1-phosphate isomerase (409 aa).

Residue Asp-277 is the Proton donor of the active site.

It belongs to the eIF-2B alpha/beta/delta subunits family. MtnA subfamily.

The protein resides in the cytoplasm. It localises to the nucleus. The enzyme catalyses 5-(methylsulfanyl)-alpha-D-ribose 1-phosphate = 5-(methylsulfanyl)-D-ribulose 1-phosphate. It functions in the pathway amino-acid biosynthesis; L-methionine biosynthesis via salvage pathway; L-methionine from S-methyl-5-thio-alpha-D-ribose 1-phosphate: step 1/6. Its function is as follows. Catalyzes the interconversion of methylthioribose-1-phosphate (MTR-1-P) into methylthioribulose-1-phosphate (MTRu-1-P). The sequence is that of Methylthioribose-1-phosphate isomerase from Scheffersomyces stipitis (strain ATCC 58785 / CBS 6054 / NBRC 10063 / NRRL Y-11545) (Yeast).